The chain runs to 399 residues: Peroxisome assembly protein 12 (399 aa).

Residues 1–24 (MSFYSNLPSAGQSSRGSSTSGRNG) are disordered. Residues 1-33 (MSFYSNLPSAGQSSRGSSTSGRNGVGLEPLYPT) lie on the Peroxisomal matrix side of the membrane. Residues 9-24 (SAGQSSRGSSTSGRNG) show a composition bias toward low complexity. Residues 34-62 (IFEIMSSQEIDSLLPASIRYLLANHLVAN) form a helical membrane-spanning segment. The Cytoplasmic portion of the chain corresponds to 63 to 67 (FPNRY). A helical membrane pass occupies residues 68–92 (TLRLNKYFFEWFQAIKGFVEWYHLK). Topologically, residues 93–136 (TYNSTFIDRFYGLQLFSSRDRNLALTQCLNPKGQSEWPQGLQLN) are peroxisomal matrix. A helical membrane pass occupies residues 137–168 (QQQKSVIFLEKIILPYITAKLDEILEKISMNN). Residues 169–171 (IFS) lie on the Cytoplasmic side of the membrane. Residues 172–208 (SDETENKWPKRAFLRIYPFIKKLLALSNLLVKLLFLT) form a helical membrane-spanning segment. Topologically, residues 209–277 (KRTGSVSLLQ…PRFLTFMGSQ (69 aa)) are peroxisomal matrix. Residues 278–305 (FFPTFIFVLRVYQWWTTQDMTTKLQKRV) form a helical membrane-spanning segment. Residues 306 to 399 (NDLDEDIPRP…VVTGIRKLLI (94 aa)) are Cytoplasmic-facing. Cys-334, Cys-337, Cys-354, and Cys-357 together coordinate Zn(2+). An RING-type; degenerate zinc finger spans residues 334–373 (CPVCEKTVQNPCVLETGYVACYPCAISYLVNNEGHCPVTN).

This sequence belongs to the pex2/pex10/pex12 family. Component of the PEX2-PEX10-PEX12 retrotranslocation channel, composed of PEX2, PEX10 and PEX12.

The protein resides in the peroxisome membrane. It participates in protein modification; protein ubiquitination. Functionally, component of a retrotranslocation channel required for peroxisome organization by mediating export of the PEX5 receptor from peroxisomes to the cytosol, thereby promoting PEX5 recycling. The retrotranslocation channel is composed of PEX2, PEX10 and PEX12; each subunit contributing transmembrane segments that coassemble into an open channel that specifically allows the passage of PEX5 through the peroxisomal membrane. PEX12 also regulates PEX5 recycling by activating the E3 ubiquitin-protein ligase activity of PEX10. When PEX5 recycling is compromised, PEX12 stimulates PEX10-mediated polyubiquitination of PEX5, leading to its subsequent degradation. The polypeptide is Peroxisome assembly protein 12 (Saccharomyces cerevisiae (strain ATCC 204508 / S288c) (Baker's yeast)).